The chain runs to 117 residues: Small ribosomal subunit protein uS8c (117 aa).

Belongs to the universal ribosomal protein uS8 family. Part of the 30S ribosomal subunit.

The protein resides in the plastid. The protein localises to the chloroplast. Its function is as follows. One of the primary rRNA binding proteins, it binds directly to 16S rRNA central domain where it helps coordinate assembly of the platform of the 30S subunit. This is Small ribosomal subunit protein uS8c (rps8) from Cyanidioschyzon merolae (strain NIES-3377 / 10D) (Unicellular red alga).